The sequence spans 202 residues: Glycerol-3-phosphate acyltransferase (202 aa).

Transmembrane regions (helical) follow at residues 3 to 23 (NLIIYAFIYLLGSIPFGLILA), 61 to 81 (IATIILDFAKAAIPLLILKFL), 87 to 107 (LLWSVAVLAIFGHCFSIYLLF), 118 to 138 (GAMIVLLPLEVLTAFIVWVVI), 144 to 164 (ISSLASLAALLAFVISSFIFN), and 167 to 187 (LEIHTHAPVFIIAFIIIYKHL).

This sequence belongs to the PlsY family. As to quaternary structure, probably interacts with PlsX.

It localises to the cell inner membrane. The enzyme catalyses an acyl phosphate + sn-glycerol 3-phosphate = a 1-acyl-sn-glycero-3-phosphate + phosphate. It functions in the pathway lipid metabolism; phospholipid metabolism. Its function is as follows. Catalyzes the transfer of an acyl group from acyl-phosphate (acyl-PO(4)) to glycerol-3-phosphate (G3P) to form lysophosphatidic acid (LPA). This enzyme utilizes acyl-phosphate as fatty acyl donor, but not acyl-CoA or acyl-ACP. This chain is Glycerol-3-phosphate acyltransferase, found in Campylobacter jejuni subsp. jejuni serotype O:23/36 (strain 81-176).